The sequence spans 610 residues: Glutamine--fructose-6-phosphate aminotransferase [isomerizing] (610 aa).

The active-site Nucleophile; for GATase activity is the Cys2. The 220-residue stretch at Cys2 to Ala221 folds into the Glutamine amidotransferase type-2 domain. 2 SIS domains span residues Ala286–Arg426 and Trp459–Pro600. Catalysis depends on Lys605, which acts as the For Fru-6P isomerization activity.

Homodimer.

The protein resides in the cytoplasm. The enzyme catalyses D-fructose 6-phosphate + L-glutamine = D-glucosamine 6-phosphate + L-glutamate. Functionally, catalyzes the first step in hexosamine metabolism, converting fructose-6P into glucosamine-6P using glutamine as a nitrogen source. This Bordetella bronchiseptica (strain ATCC BAA-588 / NCTC 13252 / RB50) (Alcaligenes bronchisepticus) protein is Glutamine--fructose-6-phosphate aminotransferase [isomerizing].